We begin with the raw amino-acid sequence, 410 residues long: Voltage-dependent chloride channel 1, chloroplastic (410 aa).

Over 1–110 (MYQSMNLSVS…RHLLSSFSSR (110 aa)) the chain is Lumenal, thylakoid. A helical transmembrane segment spans residues 111–131 (VILSLIPPVFFFTSVAVVIAS). Topologically, residues 132–147 (YNSAVALDWLPGIFPI) are stromal. The helical transmembrane segment at 148–168 (LRSSSLPYQLTAPALALLLVF) threads the bilayer. At 169 to 315 (RTEASYSRYE…PLSYTRLTSR (147 aa)) the chain is on the lumenal, thylakoid side. Transmembrane regions (helical) follow at residues 316-336 (FLVF…HWIV) and 337-357 (VPAT…GVLI). Topologically, residues 358–410 (EEPFPMLALDELCDLVHSNIQEAVKSEKVIRNRIIAKIKLHEFKHSSNGRHRS) are lumenal, thylakoid.

The protein belongs to the anion channel-forming bestrophin (TC 1.A.46) family. Voltage-dependent chloride channel subfamily. Mostly expressed in flowers and leaves and, to a lower extent, in stems and roots.

The protein resides in the plastid. It is found in the chloroplast thylakoid membrane. The catalysed reaction is chloride(in) = chloride(out). With respect to regulation, more active at positive than at negative voltages. Repressed by the general anion channel inhibitors dithiocyanatostilbene-2,20-disulphonic acid (DIDS) and niflumic acid. In terms of biological role, voltage-dependent chloride (Cl) channel critical for proton motive force (PMF) partitioning across the thylakoid membrane by anion influx into the lumen during illumination, thus being required for photoprotection under fluctuating light conditions. Influences thylakoid ultrastructure, including lumen size and organization. During photosynthetic response on transition from dark to low light, involved in a sequential mechanism of adaptation; VCCN1 and CLCe first trigger the activation of photoprotection, which is later down-regulated by KEA3 to a low steady state, while adjusting electron transport. On transition from low to high light, accelerates the activation of photoprotection by building up a pH gradient across the thylakoid membrane. This Arabidopsis thaliana (Mouse-ear cress) protein is Voltage-dependent chloride channel 1, chloroplastic.